The following is a 32-amino-acid chain: Acatoxin 1 (32 aa).

3 disulfide bridges follow: Cys-1–Cys-15, Cys-8–Cys-20, and Cys-14–Cys-26.

It localises to the secreted. The protein resides in the nematocyst. Functionally, reversibly inhibits acid-sensing ion channels (ASIC) in rat dorsal root ganglia neurons. Reversibly inhibits voltage-gated potassium channels (Kv) in rat DRG neurons. The sequence is that of Acatoxin 1 from Anthopleura cascaia (Sea anemone).